A 142-amino-acid polypeptide reads, in one-letter code: Large ribosomal subunit protein uL11 (142 aa).

Residues 86-105 form a disordered region; it reads LKSGSKEPGKQSAGQISRAK.

The protein belongs to the universal ribosomal protein uL11 family. In terms of assembly, part of the ribosomal stalk of the 50S ribosomal subunit. Interacts with L10 and the large rRNA to form the base of the stalk. L10 forms an elongated spine to which L12 dimers bind in a sequential fashion forming a multimeric L10(L12)X complex. Post-translationally, one or more lysine residues are methylated.

Forms part of the ribosomal stalk which helps the ribosome interact with GTP-bound translation factors. The sequence is that of Large ribosomal subunit protein uL11 from Chelativorans sp. (strain BNC1).